A 311-amino-acid polypeptide reads, in one-letter code: Olfactory receptor 14I1 (311 aa).

Topologically, residues 1–26 (MDNLTKVTEFLLMEFSGIWELQVLHA) are extracellular. A glycan (N-linked (GlcNAc...) asparagine) is linked at asparagine 3. A helical membrane pass occupies residues 27-47 (GLFLLIYLAVLVGNLLIIAVI). Topologically, residues 48–55 (TLDQHLHT) are cytoplasmic. A helical transmembrane segment spans residues 56–76 (PMYFFLKNLSVLDLCYISVTV). The Extracellular portion of the chain corresponds to 77–92 (PKSIRNSLTRRSSISY). Residues 93 to 113 (LGCVAQVYFFSAFASAELAFL) form a helical membrane-spanning segment. An intrachain disulfide couples cysteine 95 to cysteine 188. Residues 114–141 (TVMSYDRYVAICHPLQYRAVMTSGGCYQ) lie on the Cytoplasmic side of the membrane. Residues 142–162 (MAVTTWLSCFSYAAVHTGNMF) form a helical membrane-spanning segment. Topologically, residues 163–189 (REHVCRSSVIHQFFRDIPHVLALVSCE) are extracellular. A helical transmembrane segment spans residues 190–210 (VFFVEFLTLALSSCLVLGCFI). Over 211–241 (LMMISYFQIFSTVLRIPSGQSRAKAFSTCSP) the chain is Cytoplasmic. The chain crosses the membrane as a helical span at residues 242–262 (QLIVIMLFLTTGLFAALGPIA). Over 263-269 (KALSIQD) the chain is Extracellular. A helical transmembrane segment spans residues 270–290 (LVIALTYTVLPPFLNPIIYSL). Over 291-311 (RNKEIKTAMWRLFVKIYFLQK) the chain is Cytoplasmic.

It belongs to the G-protein coupled receptor 1 family.

It localises to the cell membrane. In terms of biological role, odorant receptor. The polypeptide is Olfactory receptor 14I1 (OR14I1) (Homo sapiens (Human)).